Here is an 87-residue protein sequence, read N- to C-terminus: Small ribosomal subunit protein bS20 (87 aa).

It belongs to the bacterial ribosomal protein bS20 family.

In terms of biological role, binds directly to 16S ribosomal RNA. The chain is Small ribosomal subunit protein bS20 from Finegoldia magna (strain ATCC 29328 / DSM 20472 / WAL 2508) (Peptostreptococcus magnus).